A 389-amino-acid polypeptide reads, in one-letter code: Phosphoglycerate kinase (389 aa).

Residues 21–23 (DLN), arginine 36, 59–62 (HLGR), arginine 112, and arginine 145 contribute to the substrate site. Residues lysine 196, glutamate 313, and 342–345 (GGDT) contribute to the ATP site.

This sequence belongs to the phosphoglycerate kinase family. Monomer.

It is found in the cytoplasm. It catalyses the reaction (2R)-3-phosphoglycerate + ATP = (2R)-3-phospho-glyceroyl phosphate + ADP. It participates in carbohydrate degradation; glycolysis; pyruvate from D-glyceraldehyde 3-phosphate: step 2/5. The polypeptide is Phosphoglycerate kinase (Histophilus somni (strain 2336) (Haemophilus somnus)).